Here is a 618-residue protein sequence, read N- to C-terminus: tRNA 5-methylaminomethyl-2-thiouridine biosynthesis bifunctional protein MnmC (618 aa).

The segment at 1–231 is tRNA (mnm(5)s(2)U34)-methyltransferase; sequence MLQTYAPIDF…KRHMLSAVYE (231 aa). Residues 256-618 form an FAD-dependent cmnm(5)s(2)U34 oxidoreductase region; it reads IGAGIAGATT…KDIIRGHLNN (363 aa).

In the N-terminal section; belongs to the methyltransferase superfamily. tRNA (mnm(5)s(2)U34)-methyltransferase family. The protein in the C-terminal section; belongs to the DAO family. It depends on FAD as a cofactor.

It localises to the cytoplasm. The catalysed reaction is 5-aminomethyl-2-thiouridine(34) in tRNA + S-adenosyl-L-methionine = 5-methylaminomethyl-2-thiouridine(34) in tRNA + S-adenosyl-L-homocysteine + H(+). Functionally, catalyzes the last two steps in the biosynthesis of 5-methylaminomethyl-2-thiouridine (mnm(5)s(2)U) at the wobble position (U34) in tRNA. Catalyzes the FAD-dependent demodification of cmnm(5)s(2)U34 to nm(5)s(2)U34, followed by the transfer of a methyl group from S-adenosyl-L-methionine to nm(5)s(2)U34, to form mnm(5)s(2)U34. The protein is tRNA 5-methylaminomethyl-2-thiouridine biosynthesis bifunctional protein MnmC of Dichelobacter nodosus (strain VCS1703A).